A 303-amino-acid chain; its full sequence is Zinc import ATP-binding protein ZnuC (303 aa).

Residues 17 to 232 enclose the ABC transporter domain; the sequence is VSLENVGVLR…PEYVRLFGSR (216 aa). 49 to 56 serves as a coordination point for ATP; it reads GPNGSGKS. Residues 263-303 form a disordered region; that stretch reads DHCHPDDGHHAHEHGHAGHEHDHDHPDHAHPHAHEAGERHA.

This sequence belongs to the ABC transporter superfamily. Zinc importer (TC 3.A.1.15.5) family. In terms of assembly, the complex is composed of two ATP-binding proteins (ZnuC), two transmembrane proteins (ZnuB) and a solute-binding protein (ZnuA).

Its subcellular location is the cell inner membrane. The catalysed reaction is Zn(2+)(out) + ATP(in) + H2O(in) = Zn(2+)(in) + ADP(in) + phosphate(in) + H(+)(in). Part of the ABC transporter complex ZnuABC involved in zinc import. Responsible for energy coupling to the transport system. This is Zinc import ATP-binding protein ZnuC from Rhizobium johnstonii (strain DSM 114642 / LMG 32736 / 3841) (Rhizobium leguminosarum bv. viciae).